An 830-amino-acid chain; its full sequence is Venom phosphodiesterase (830 aa).

SMB domains follow at residues Pro-7 to Thr-50 and Gln-51 to Ser-95. 16 cysteine pairs are disulfide-bonded: Cys-11/Cys-15, Cys-11/Cys-28, Cys-15/Cys-46, Cys-26/Cys-28, Cys-26/Cys-39, Cys-32/Cys-38, Cys-39/Cys-46, Cys-55/Cys-60, Cys-55/Cys-72, Cys-60/Cys-90, Cys-70/Cys-72, Cys-70/Cys-83, Cys-76/Cys-82, Cys-83/Cys-90, Cys-101/Cys-147, and Cys-109/Cys-321. The N-linked (GlcNAc...) asparagine glycan is linked to Asn-16. The Cell attachment site signature appears at Arg-35–Ala-37. A divalent metal cation-binding residues include Asp-124 and Thr-162. The active-site AMP-threonine intermediate is Thr-162. Residues Asn-193, Asn-236, and Asn-247 are each glycosylated (N-linked (GlcNAc...) asparagine). Lys-248 serves as a coordination point for AMP. A divalent metal cation-binding residues include Asp-282, His-286, Asp-329, and His-330. His-286 contacts AMP. Disulfide bonds link Cys-337/Cys-434, Cys-385/Cys-772, Cys-518/Cys-575, Cys-531/Cys-632, Cys-533/Cys-617, and Cys-740/Cys-750. Position 439 (His-439) interacts with a divalent metal cation. A glycan (N-linked (GlcNAc...) asparagine) is linked at Asn-489. N-linked (GlcNAc...) asparagine glycosylation is found at Asn-723 and Asn-742.

The protein belongs to the nucleotide pyrophosphatase/phosphodiesterase family. Monomer cleaved in two subunits; disulfide-linked. Is synthesized as a single-chain protein and is subsequently cleaved to form a two-subunit protein held together with disulfide bonds. A divalent metal cation is required as a cofactor. In terms of tissue distribution, expressed by venom gland.

The protein resides in the secreted. The enzyme catalyses ADP + H2O = AMP + phosphate + H(+). Functionally, hydrolyzes ADP with high activity. Shows weak or no activity on 5'-AMP, 5'-GMP, 3'-AMP, ATP, cAMP, and cGMP. Is devoid of monophosphatase and proteinase activities. Dose-dependently inhibits platelet aggregation induced by ADP and collagen. The polypeptide is Venom phosphodiesterase (Naja atra (Chinese cobra)).